Reading from the N-terminus, the 95-residue chain is Small ubiquitin-related modifier 2 (95 aa).

Residue Lys11 forms a Glycyl lysine isopeptide (Lys-Gly) (interchain with G-Cter in SUMO) linkage. Positions 16-95 constitute a Ubiquitin-like domain; the sequence is DHINLKVAGQ…VFQQQTGGSF (80 aa). Gly93 participates in a covalent cross-link: Glycyl lysine isopeptide (Gly-Lys) (interchain with K-? in acceptor proteins). Positions 94–95 are excised as a propeptide; sequence SF.

This sequence belongs to the ubiquitin family. SUMO subfamily. In terms of assembly, interacts with sae2 and ube2i. Covalently attached to a number of proteins, including top2. In terms of processing, polymeric chains can be formed through Lys-11 cross-linking. Cleavage of precursor form by a sentrin-specific protease is necessary for function.

The protein localises to the nucleus. Functionally, ubiquitin-like protein that can be covalently attached to proteins as a monomer or as a lysine-linked polymer. Covalent attachment via an isopeptide bond to its substrates requires prior activation by the E1 complex sae1-sae2 and linkage to the E2 enzyme ube2i, and can be promoted by an E3 ligase such as pias1-4. This post-translational modification on lysine residues of proteins plays a crucial role in a number of cellular processes such as nuclear transport, DNA replication and repair, mitosis and signal transduction. Polymeric sumo2 chains are also susceptible to polyubiquitination which functions as a signal for proteasomal degradation of modified proteins. This Xenopus tropicalis (Western clawed frog) protein is Small ubiquitin-related modifier 2 (sumo2).